A 240-amino-acid polypeptide reads, in one-letter code: Uridylate kinase (240 aa).

An ATP-binding site is contributed by 12–15; it reads KLSG. UMP is bound at residue glycine 54. ATP contacts are provided by glycine 55 and arginine 59. UMP-binding positions include aspartate 74 and 135-142; that span reads TGNPFFTT. Residues threonine 162, tyrosine 168, and aspartate 171 each contribute to the ATP site.

The protein belongs to the UMP kinase family. As to quaternary structure, homohexamer.

It is found in the cytoplasm. It catalyses the reaction UMP + ATP = UDP + ADP. The protein operates within pyrimidine metabolism; CTP biosynthesis via de novo pathway; UDP from UMP (UMPK route): step 1/1. With respect to regulation, inhibited by UTP. Catalyzes the reversible phosphorylation of UMP to UDP. This is Uridylate kinase from Xanthomonas campestris pv. campestris (strain ATCC 33913 / DSM 3586 / NCPPB 528 / LMG 568 / P 25).